A 250-amino-acid chain; its full sequence is Prophage antitermination protein Q homolog QuuQ (250 aa).

Belongs to the phage antitermination Q type 2 family.

Positively regulate expression of some phage genes. Bacterial host RNA polymerase modified by antitermination proteins transcribes through termination sites that otherwise prevent expression of the regulated genes. The protein is Prophage antitermination protein Q homolog QuuQ (quuQ) of Escherichia coli (strain K12).